Reading from the N-terminus, the 189-residue chain is MGIAFFGGSFDPIHIGHILVARDVCELCDVDKIYFMPAFISPFKPKPIASPKQRFEMLKLALEDEPWAFIEDIELKKEEISYTYKSALILKEKYQQPPTFIIGYDAYLTLDKWYRYEDLVKIANFIVVKRGKEDIFINNDIDAIFCNTRTIDISSTEIRERIKHGKSVKYMIPDKVLEFILKEGIYAKS.

Belongs to the NadD family.

It catalyses the reaction nicotinate beta-D-ribonucleotide + ATP + H(+) = deamido-NAD(+) + diphosphate. It participates in cofactor biosynthesis; NAD(+) biosynthesis; deamido-NAD(+) from nicotinate D-ribonucleotide: step 1/1. In terms of biological role, catalyzes the reversible adenylation of nicotinate mononucleotide (NaMN) to nicotinic acid adenine dinucleotide (NaAD). The polypeptide is Probable nicotinate-nucleotide adenylyltransferase (Hydrogenobaculum sp. (strain Y04AAS1)).